The primary structure comprises 373 residues: Probable quinol oxidase subunit 2 (373 aa).

The first 19 residues, Met1–Gly19, serve as a signal peptide directing secretion. Cys20 carries N-palmitoyl cysteine lipidation. Cys20 carries S-diacylglycerol cysteine lipidation. The next 2 membrane-spanning stretches (helical) occupy residues Phe38–Phe58 and Leu82–Val102. Composition is skewed to basic and acidic residues over residues Glu292–Gly320 and Glu339–His373. Positions Glu292 to His373 are disordered.

It belongs to the cytochrome c oxidase subunit 2 family.

The protein localises to the cell membrane. The catalysed reaction is 2 a quinol + O2 = 2 a quinone + 2 H2O. Functionally, catalyzes quinol oxidation with the concomitant reduction of oxygen to water. Subunit II transfers the electrons from a quinol to the binuclear center of the catalytic subunit I. The polypeptide is Probable quinol oxidase subunit 2 (qoxA) (Staphylococcus saprophyticus subsp. saprophyticus (strain ATCC 15305 / DSM 20229 / NCIMB 8711 / NCTC 7292 / S-41)).